Here is a 492-residue protein sequence, read N- to C-terminus: Catalase-4 (492 aa).

Residues His65 and Asn138 contribute to the active site. Tyr348 contributes to the heme binding site.

Belongs to the catalase family. In terms of assembly, homotetramer. It depends on heme as a cofactor.

The protein resides in the peroxisome. It localises to the glyoxysome. It catalyses the reaction 2 H2O2 = O2 + 2 H2O. Functionally, occurs in almost all aerobically respiring organisms and serves to protect cells from the toxic effects of hydrogen peroxide. The chain is Catalase-4 (CAT4) from Glycine max (Soybean).